The following is a 271-amino-acid chain: Elongation factor Ts (271 aa).

Positions T76 to V79 are involved in Mg(2+) ion dislocation from EF-Tu.

The protein belongs to the EF-Ts family.

The protein resides in the cytoplasm. Its function is as follows. Associates with the EF-Tu.GDP complex and induces the exchange of GDP to GTP. It remains bound to the aminoacyl-tRNA.EF-Tu.GTP complex up to the GTP hydrolysis stage on the ribosome. The protein is Elongation factor Ts of Mycobacterium tuberculosis (strain ATCC 25177 / H37Ra).